The primary structure comprises 859 residues: Sulfate permease 1 (859 aa).

N-linked (GlcNAc...) asparagine glycans are attached at residues Asn-51 and Asn-93. The next 8 membrane-spanning stretches (helical) occupy residues 94–114 (LTAK…KWFP), 116–136 (YNFT…CVLV), 148–168 (LSPE…SLFA), 173–193 (VCIG…AEVL), 206–226 (PIIA…LGIL), 234–254 (LISL…IIWG), 292–312 (FGLI…TFGI), and 332–352 (FYFY…TAIS). N-linked (GlcNAc...) asparagine glycans are attached at residues Asn-358 and Asn-391. The next 4 helical transmembrane spans lie at 395-415 (EIPA…KSFG), 428-448 (LIAI…PATG), 468-488 (VFTG…FFFI), and 525-545 (FIVT…YFAM). 3 N-linked (GlcNAc...) asparagine glycosylation sites follow: Asn-630, Asn-653, and Asn-718. The region spanning 630–808 (NTTVRPPPPG…SIIAGHSSFH (179 aa)) is the STAS domain.

This sequence belongs to the SLC26A/SulP transporter (TC 2.A.53) family.

Its subcellular location is the membrane. Functionally, high affinity uptake of sulfate into the cell. The chain is Sulfate permease 1 (SUL1) from Saccharomyces cerevisiae (strain ATCC 204508 / S288c) (Baker's yeast).